Reading from the N-terminus, the 206-residue chain is Large ribosomal subunit protein uL4 (206 aa).

Residues 48-59 are compositionally biased toward basic and acidic residues; it reads THDTKTRSEVRG. Residues 48–77 form a disordered region; the sequence is THDTKTRSEVRGGGRKPWRQKGTGRARHGS. Residues 60-77 show a composition bias toward basic residues; sequence GGRKPWRQKGTGRARHGS.

This sequence belongs to the universal ribosomal protein uL4 family. As to quaternary structure, part of the 50S ribosomal subunit.

In terms of biological role, one of the primary rRNA binding proteins, this protein initially binds near the 5'-end of the 23S rRNA. It is important during the early stages of 50S assembly. It makes multiple contacts with different domains of the 23S rRNA in the assembled 50S subunit and ribosome. Functionally, forms part of the polypeptide exit tunnel. This Pelotomaculum thermopropionicum (strain DSM 13744 / JCM 10971 / SI) protein is Large ribosomal subunit protein uL4.